Here is a 75-residue protein sequence, read N- to C-terminus: UPF0346 protein LSL_0716 (75 aa).

The protein belongs to the UPF0346 family.

The polypeptide is UPF0346 protein LSL_0716 (Ligilactobacillus salivarius (strain UCC118) (Lactobacillus salivarius)).